The chain runs to 400 residues: Methylamine dehydrogenase heavy chain (400 aa).

The signal sequence occupies residues 1–27 (MTTFQPGRLAGQLAATALLAATCSAFA).

It belongs to the aromatic amine dehydrogenase heavy chain family. As to quaternary structure, tetramer of two light and two heavy chains.

The protein localises to the periplasm. It carries out the reaction 2 oxidized [amicyanin] + methylamine + H2O = 2 reduced [amicyanin] + formaldehyde + NH4(+) + 2 H(+). Its function is as follows. Methylamine dehydrogenase carries out the oxidation of methylamine. Electrons are passed from methylamine dehydrogenase to amicyanin. The protein is Methylamine dehydrogenase heavy chain (mauB) of Methylobacillus flagellatus (strain ATCC 51484 / DSM 6875 / VKM B-1610 / KT).